A 265-amino-acid chain; its full sequence is Undecaprenyl-diphosphatase (265 aa).

The next 7 helical transmembrane spans lie at alanine 42–tryptophan 62, glycine 82–serine 102, leucine 108–valine 128, methionine 143–phenylalanine 163, glycine 181–tyrosine 201, glycine 221–glycine 241, and phenylalanine 248–alanine 264.

Belongs to the UppP family.

It is found in the cell inner membrane. The catalysed reaction is di-trans,octa-cis-undecaprenyl diphosphate + H2O = di-trans,octa-cis-undecaprenyl phosphate + phosphate + H(+). Catalyzes the dephosphorylation of undecaprenyl diphosphate (UPP). Confers resistance to bacitracin. The protein is Undecaprenyl-diphosphatase of Nitratidesulfovibrio vulgaris (strain DP4) (Desulfovibrio vulgaris).